A 615-amino-acid chain; its full sequence is Peptidoglycan-binding protein YepA (615 aa).

The signal sequence occupies residues 1-26 (MRNLAALLPALFLLGSSLLPAGTALA).

It belongs to the bacterial solute-binding protein 5 family. As to quaternary structure, the complex is composed of one ATP-binding protein (YejF), two transmembrane proteins (YejB and YejE) and a solute-binding protein (YepA).

The protein resides in the periplasm. In terms of biological role, part of the ABC transporter complex YejBEF-YepA involved in the uptake of muropeptides, the breakdown products of cell wall peptidoglycan. The import of muropeptides into the cell enables peptidoglycan recycling, which is vital for cell wall integrity in this bacterium. Probably binds muropeptides. The protein is Peptidoglycan-binding protein YepA of Agrobacterium fabrum (strain C58 / ATCC 33970) (Agrobacterium tumefaciens (strain C58)).